We begin with the raw amino-acid sequence, 1006 residues long: Pentatricopeptide repeat-containing protein At1g30610, chloroplastic (1006 aa).

A chloroplast-targeting transit peptide spans 1-40 (MAVTISTNAFVNASLLDESRNSFWRPLFHQPYYNCRRVVR). 2 disordered regions span residues 180-219 (LSKS…ERGS) and 248-292 (SSVA…IARG). Over residues 194–219 (ESFRKRYSKQEYHRSSDTSRGIERGS) the composition is skewed to basic and acidic residues. A compositionally biased stretch (polar residues) spans 254-263 (WSNSGESSVT). The segment covering 265–284 (PKDESFRRRYSKQEHHRSSD) has biased composition (basic and acidic residues). PPR repeat units follow at residues 468 to 502 (TDYT…DRYK), 506 to 536 (IRII…MLLQ), 542 to 572 (DMVA…MRSP), 592 to 626 (DVVV…GQKP), 627 to 657 (SPVT…MQKS), 661 to 695 (NALA…GIVG), 759 to 789 (LVVT…MKKV), 793 to 827 (NLVT…GNHI), 840 to 874 (DTYT…GYHF), and 875 to 909 (NAKR…NRIP).

The protein belongs to the PPR family. P subfamily.

Its subcellular location is the plastid. The protein localises to the chloroplast. Its function is as follows. May play a role in embryogenesis. The sequence is that of Pentatricopeptide repeat-containing protein At1g30610, chloroplastic (EMB2279) from Arabidopsis thaliana (Mouse-ear cress).